Reading from the N-terminus, the 263-residue chain is Proteasome subunit alpha type-1 (263 aa).

M1 carries the post-translational modification N-acetylmethionine. S110 carries the post-translational modification Phosphoserine; alternate. A glycan (O-linked (GlcNAc) serine; alternate) is linked at S110. K115 is covalently cross-linked (Glycyl lysine isopeptide (Lys-Gly) (interchain with G-Cter in ubiquitin)). S177 carries the phosphoserine modification. A Glycyl lysine isopeptide (Lys-Gly) (interchain with G-Cter in ubiquitin) cross-link involves residue K208. Residues F232–H263 are disordered. Over residues P253–H263 the composition is skewed to basic and acidic residues.

Belongs to the peptidase T1A family. In terms of assembly, the 26S proteasome consists of a 20S proteasome core and two 19S regulatory subunits. The 20S proteasome core is a barrel-shaped complex made of 28 subunits that are arranged in four stacked rings. The two outer rings are each formed by seven alpha subunits, and the two inner rings are formed by seven beta subunits. The proteolytic activity is exerted by three beta-subunits PSMB5, PSMB6 and PSMB7. Interacts with NOTCH3. Interacts with ZFAND1.

It localises to the cytoplasm. The protein resides in the nucleus. Functionally, component of the 20S core proteasome complex involved in the proteolytic degradation of most intracellular proteins. This complex plays numerous essential roles within the cell by associating with different regulatory particles. Associated with two 19S regulatory particles, forms the 26S proteasome and thus participates in the ATP-dependent degradation of ubiquitinated proteins. The 26S proteasome plays a key role in the maintenance of protein homeostasis by removing misfolded or damaged proteins that could impair cellular functions, and by removing proteins whose functions are no longer required. Associated with the PA200 or PA28, the 20S proteasome mediates ubiquitin-independent protein degradation. This type of proteolysis is required in several pathways including spermatogenesis (20S-PA200 complex) or generation of a subset of MHC class I-presented antigenic peptides (20S-PA28 complex). The protein is Proteasome subunit alpha type-1 (PSMA1) of Macaca fascicularis (Crab-eating macaque).